A 154-amino-acid polypeptide reads, in one-letter code: Aspartate carbamoyltransferase regulatory chain (154 aa).

4 residues coordinate Zn(2+): Cys109, Cys114, Cys138, and Cys141.

It belongs to the PyrI family. As to quaternary structure, contains catalytic and regulatory chains. Zn(2+) is required as a cofactor.

Involved in allosteric regulation of aspartate carbamoyltransferase. The chain is Aspartate carbamoyltransferase regulatory chain from Photorhabdus laumondii subsp. laumondii (strain DSM 15139 / CIP 105565 / TT01) (Photorhabdus luminescens subsp. laumondii).